Here is a 667-residue protein sequence, read N- to C-terminus: tRNA 5-methylaminomethyl-2-thiouridine biosynthesis bifunctional protein MnmC (667 aa).

Residues 1-12 (MSKQQAPNTTGI) show a composition bias toward polar residues. The interval 1 to 20 (MSKQQAPNTTGIGTADLQWH) is disordered. Residues 1 to 240 (MSKQQAPNTT…KRECLRGVLE (240 aa)) are tRNA (mnm(5)s(2)U34)-methyltransferase. Residues 268-667 (IGAGIAGAAC…LVRSLKKPPL (400 aa)) form an FAD-dependent cmnm(5)s(2)U34 oxidoreductase region.

In the N-terminal section; belongs to the methyltransferase superfamily. tRNA (mnm(5)s(2)U34)-methyltransferase family. This sequence in the C-terminal section; belongs to the DAO family. The cofactor is FAD.

The protein localises to the cytoplasm. It catalyses the reaction 5-aminomethyl-2-thiouridine(34) in tRNA + S-adenosyl-L-methionine = 5-methylaminomethyl-2-thiouridine(34) in tRNA + S-adenosyl-L-homocysteine + H(+). Functionally, catalyzes the last two steps in the biosynthesis of 5-methylaminomethyl-2-thiouridine (mnm(5)s(2)U) at the wobble position (U34) in tRNA. Catalyzes the FAD-dependent demodification of cmnm(5)s(2)U34 to nm(5)s(2)U34, followed by the transfer of a methyl group from S-adenosyl-L-methionine to nm(5)s(2)U34, to form mnm(5)s(2)U34. This Magnetococcus marinus (strain ATCC BAA-1437 / JCM 17883 / MC-1) protein is tRNA 5-methylaminomethyl-2-thiouridine biosynthesis bifunctional protein MnmC.